The chain runs to 648 residues: MGNVQTSVNTYNITGDGNSFTPTSDMTSTAAPAIDLKPGVLNPTGKLWRPVGTSVATIDSLAIVSDRFGQYSFVNEGMRETFSKALFDINMWQPLFQATKTGCGPIVLSSFTTTTSGYVGATAGDALDNPVTNGVFISTVQVMNLQRTIAARMRDVALWQQHLDTAMTMLTPDISAGSASCNWKSLLAFAKDILPLDNLCLTYPNEFYNVAIHRYPALKPGNPDTKLPDAQAHPLGEVAGAFNAATSEVGSLVGSSSTLSQAISTMAGKDLDLIEADTPLPVSVFTPSLAPRSYRPAFIKPEDAKWIAEFNNSSLIRKTLTYSGATYAVQLGPGPTRVIDMNAMIDSVLTLDVSGTILPYDTNPDLSTSVPAFVLIQTSVPIQQVTTAANITAITVVSAAGASAINLAINVRGQPRFNMLHLQATFERETITGIPYIYGLGTFLIPSPTSSSNFSNPTLMDGLLTVTPVLLRETTYKGEVVDAIVPATVMANQTSEEVASALANDAIVLVSNHLNKLANVVGDAIPVASKTDDSATSAIVSRLAVQHKLSQVGQTSPTPPDYPLLWRRAKRAASMFVSNPSLALQVGIPVLTQSGMLSALTSGVGTALRTGSLGKGVTDASEKLRARQSLTVAKQAFFDQIGSLWPGK.

The N-myristoyl glycine; by host moiety is linked to residue G2. N-linked (GlcNAc...) asparagine; by host glycosylation is found at N12, N311, N312, N390, N453, and N492.

This sequence belongs to the aquareoviridae outer capsid VP4 protein family. As to quaternary structure, interacts with VP6 and VP7. Cleaved during the endosomal proteolytic disassembly of the outer capsid. In terms of processing, N-terminally myristoylated. This acylation is essential for the membrane fusion activity.

It localises to the virion. Its function is as follows. Interacts with VP7 to form the outer icosahedral capsid with an incomplete T=13 symmetry, about 80 nm in diameter, and consisting of 200 VP4-VP7 trimers. Myristoylated N-terminal peptide may be released in the endosome and involved in permeabilization and delivery of transcriptionally active viral particles into the host cell cytoplasm (Potential). This is Outer capsid protein VP4 (S6) from Notemigonus crysoleucas (Golden shiner).